Reading from the N-terminus, the 761-residue chain is MGSFLRSFRHNGGSTAPSVGAVPAKKEPQPPPMTPLEKRLLDMGPIREDGSDKFYGMENYGNTCYCNSILQCLYYSVPFREAVINYPTRTPIESLEAALAKSLRYPNPNAQLEAEAQAEKQKAANAQRPGMPPNPQQKPEDKDSPEYKKKMALQTLPLLETQNNAASYGMSESLFTSLKDIFESVVGSQSRIGIIRPQQFLEVLRRDHEMFRTAMHQDAHEFLNLLLNEVVANVEAEASKQPLMEKSLPAPETADSVDQSSSTGSKTPNTTRWVHELFEGLLTSETQCLTCEKVSQRDEVFLDLSVDLEQHSSVTSCLRKFSAEEMLCERNKFHCDNCGGLQEAEKRMKIKRLPRILALHLKRFKYTEDLQRLQKLFHRVVYPYHLRLFNTTDDAEDPDRLYELYAVVVHIGGGPYHGHYVAIIKTEDRGWLLFDDEMVEPVDKNYVKNFFGDKPGLACAYVLFYQETTLEAVLKEQEQENMDSNLAATDANDTILKQNGFPQSPLAHVHSASQIPSHEDNLRPNGLRRAPTAPQLSTHHEHGDPESTPFSPLSPLSPVPPVPPIPERVATVATPPKNDALAKREEKERKAAEKEKEKAEKLRRKEQGARMKENQRREEAELKAALEMSKASKAEEDRRLSTENGKEKQGGGLSRLKRGSKSLSHRLGKDKETRSVSSDLPPVPIPEHSTLSQSGPTSEQQQQQRQQSPPNHDQPPNSPQPGKPTIREDEQVNHKDSKHERTGHGKWRSFSLRKKSFSILS.

Positions 1 to 45 are disordered; the sequence is MGSFLRSFRHNGGSTAPSVGAVPAKKEPQPPPMTPLEKRLLDMGP. Positions 36-45 are enriched in basic and acidic residues; that stretch reads LEKRLLDMGP. Residues 55 to 468 form the USP domain; sequence YGMENYGNTC…CAYVLFYQET (414 aa). Cys64 serves as the catalytic Nucleophile. Disordered stretches follow at residues 113-146 and 242-269; these read EAEA…DSPE and PLME…KTPN. Polar residues predominate over residues 256-269; it reads SVDQSSSTGSKTPN. His419 serves as the catalytic Proton acceptor. Positions 496–761 are disordered; that stretch reads LKQNGFPQSP…LRKKSFSILS (266 aa). A compositionally biased stretch (pro residues) spans 555-566; the sequence is PLSPVPPVPPIP. A coiled-coil region spans residues 577–640; it reads KNDALAKREE…ASKAEEDRRL (64 aa). The segment covering 580 to 649 has biased composition (basic and acidic residues); the sequence is ALAKREEKER…LSTENGKEKQ (70 aa). Residues 655-666 are compositionally biased toward basic residues; sequence RLKRGSKSLSHR. Positions 692–710 are enriched in low complexity; the sequence is SQSGPTSEQQQQQRQQSPP. Residues 712–722 are compositionally biased toward pro residues; the sequence is HDQPPNSPQPG. Positions 725–743 are enriched in basic and acidic residues; it reads TIREDEQVNHKDSKHERTG. The segment covering 744–761 has biased composition (basic residues); the sequence is HGKWRSFSLRKKSFSILS.

The protein belongs to the peptidase C19 family. Interacts with creA, creC and qutD.

It catalyses the reaction Thiol-dependent hydrolysis of ester, thioester, amide, peptide and isopeptide bonds formed by the C-terminal Gly of ubiquitin (a 76-residue protein attached to proteins as an intracellular targeting signal).. Its function is as follows. Ubiquitin thioesterase component of the regulatory network controlling carbon source utilization through ubiquitination and deubiquitination involving creA, creB, creC, creD and acrB. Deubiquitinates the creA catabolic repressor and the quinate permease qutD. Also plays a role in response to carbon starvation and the control of extracellular proteases activity. The sequence is that of Probable ubiquitin carboxyl-terminal hydrolase creB (creB) from Neosartorya fischeri (strain ATCC 1020 / DSM 3700 / CBS 544.65 / FGSC A1164 / JCM 1740 / NRRL 181 / WB 181) (Aspergillus fischerianus).